The sequence spans 340 residues: Deubiquitinase SseL (340 aa).

The active site involves H223. C285 serves as the catalytic Nucleophile.

The protein belongs to the peptidase C79 family.

It localises to the secreted. The protein localises to the host cytoplasm. In terms of biological role, effector proteins function to alter host cell physiology and promote bacterial survival in host tissues. This protease targets the host cell ubiquitin pathway by acting as a deubiquitinase in infected host cells. This Salmonella choleraesuis (strain SC-B67) protein is Deubiquitinase SseL (sseL).